The sequence spans 155 residues: Ribosomal RNA large subunit methyltransferase H (155 aa).

Residues Leu72, Gly103, and 122–127 contribute to the S-adenosyl-L-methionine site; that span reads LSTLTL.

This sequence belongs to the RNA methyltransferase RlmH family. Homodimer.

Its subcellular location is the cytoplasm. The enzyme catalyses pseudouridine(1915) in 23S rRNA + S-adenosyl-L-methionine = N(3)-methylpseudouridine(1915) in 23S rRNA + S-adenosyl-L-homocysteine + H(+). Functionally, specifically methylates the pseudouridine at position 1915 (m3Psi1915) in 23S rRNA. This chain is Ribosomal RNA large subunit methyltransferase H, found in Klebsiella pneumoniae (strain 342).